Reading from the N-terminus, the 274-residue chain is Subtilisin DY (274 aa).

Ca(2+) is bound at residue Gln2. Residues Pro5–Ala273 enclose the Peptidase S8 domain. Asp32 (charge relay system) is an active-site residue. Asp41 contributes to the Ca(2+) binding site. Catalysis depends on His63, which acts as the Charge relay system. Residues Leu74, Asn76, Val80, Ala168, Tyr170, and Val173 each contribute to the Ca(2+) site. The active-site Charge relay system is the Ser220.

The protein belongs to the peptidase S8 family. Requires Ca(2+) as cofactor.

The protein resides in the secreted. The enzyme catalyses Hydrolysis of proteins with broad specificity for peptide bonds, and a preference for a large uncharged residue in P1. Hydrolyzes peptide amides.. Subtilisin is an extracellular alkaline serine protease, it catalyzes the hydrolysis of proteins and peptide amides. This is Subtilisin DY (apr) from Bacillus licheniformis.